A 554-amino-acid chain; its full sequence is Arginine--tRNA ligase (554 aa).

The short motif at 129-139 (ANPTGPLHIGH) is the 'HIGH' region element.

It belongs to the class-I aminoacyl-tRNA synthetase family. Monomer.

The protein resides in the cytoplasm. It catalyses the reaction tRNA(Arg) + L-arginine + ATP = L-arginyl-tRNA(Arg) + AMP + diphosphate. In Geobacter sp. (strain M21), this protein is Arginine--tRNA ligase.